The chain runs to 275 residues: Large ribosomal subunit protein uL2 (275 aa).

Disordered stretches follow at residues 24–54 (LYKG…VRHQ) and 223–275 (VAMN…RHKR). Composition is skewed to basic and acidic residues over residues 25 to 38 (YKGR…EKKT) and 229 to 241 (DHPH…RTGE).

It belongs to the universal ribosomal protein uL2 family. Part of the 50S ribosomal subunit. Forms a bridge to the 30S subunit in the 70S ribosome.

One of the primary rRNA binding proteins. Required for association of the 30S and 50S subunits to form the 70S ribosome, for tRNA binding and peptide bond formation. It has been suggested to have peptidyltransferase activity; this is somewhat controversial. Makes several contacts with the 16S rRNA in the 70S ribosome. This chain is Large ribosomal subunit protein uL2, found in Azoarcus sp. (strain BH72).